We begin with the raw amino-acid sequence, 458 residues long: Protein U54 (458 aa).

7 N-linked (GlcNAc...) asparagine; by host glycosylation sites follow: Asn-76, Asn-102, Asn-281, Asn-321, Asn-346, Asn-434, and Asn-451.

Belongs to the herpesviridae UL82 family.

This Homo sapiens (Human) protein is Protein U54 (U54).